Consider the following 195-residue polypeptide: E3 ubiquitin-protein ligase ZNRF1 (195 aa).

Polar residues predominate over residues 1-10; sequence MGGKQSSASR. 2 disordered regions span residues 1–36 and 61–84; these read MGGKQSSASRSRAPFPGVSSDDSAVPPSSNFGHFRA and PFGLYRAGPDTERGGSSGSEDSRG. Gly-2 carries the N-myristoyl glycine lipid modification. Over residues 18-29 the composition is skewed to low complexity; it reads VSSDDSAVPPSS. An RING-type; atypical zinc finger spans residues 152 to 193; the sequence is CVICLEELSQGDTIARLPCLCIYHKSCIDSWFEVNRCCPEHP.

It localises to the endosome. The protein localises to the lysosome. Its subcellular location is the membrane. The enzyme catalyses S-ubiquitinyl-[E2 ubiquitin-conjugating enzyme]-L-cysteine + [acceptor protein]-L-lysine = [E2 ubiquitin-conjugating enzyme]-L-cysteine + N(6)-ubiquitinyl-[acceptor protein]-L-lysine.. The protein operates within protein modification; protein ubiquitination. Its function is as follows. E3 ubiquitin-protein ligase that plays a role in neuron cells differentiation. Plays a role in the establishment and maintenance of neuronal transmission and plasticity. This chain is E3 ubiquitin-protein ligase ZNRF1 (znrf1), found in Xenopus tropicalis (Western clawed frog).